The primary structure comprises 488 residues: 3-octaprenyl-4-hydroxybenzoate carboxy-lyase (488 aa).

A Mn(2+)-binding site is contributed by asparagine 172. Residues 175–177, 189–191, and 194–195 each bind prenylated FMN; these read IYR, RWL, and RG. Mn(2+) is bound at residue glutamate 238. The Proton donor role is filled by aspartate 287.

The protein belongs to the UbiD family. In terms of assembly, homohexamer. Prenylated FMN serves as cofactor. It depends on Mn(2+) as a cofactor.

It localises to the cell membrane. The enzyme catalyses a 4-hydroxy-3-(all-trans-polyprenyl)benzoate + H(+) = a 2-(all-trans-polyprenyl)phenol + CO2. Its pathway is cofactor biosynthesis; ubiquinone biosynthesis. Its function is as follows. Catalyzes the decarboxylation of 3-octaprenyl-4-hydroxy benzoate to 2-octaprenylphenol, an intermediate step in ubiquinone biosynthesis. This is 3-octaprenyl-4-hydroxybenzoate carboxy-lyase from Alkalilimnicola ehrlichii (strain ATCC BAA-1101 / DSM 17681 / MLHE-1).